A 1593-amino-acid chain; its full sequence is Laminin subunit gamma-1 (1593 aa).

Residues 1–19 (MSLFSCLLLWTLWAACSHG) form the signal peptide. The 240-residue stretch at 30-269 (RPQRCMPEFV…AISDFAVGGR (240 aa)) folds into the Laminin N-terminal domain. N44 and N118 each carry an N-linked (GlcNAc...) asparagine glycan. Intrachain disulfides connect C270–C279, C272–C289, C291–C300, C303–C323, C326–C335, C328–C351, C354–C363, C366–C379, C382–C394, C384–C400, C402–C411, C414–C426, C429–C440, C431–C447, C449–C458, and C461–C476. 4 Laminin EGF-like domains span residues 270–325 (CKCN…ECLP), 326–381 (CNCN…RCLS), 382–428 (CGCN…GCRP), and 429–478 (CSCN…GCTP). A Laminin IV type A domain is found at 505 to 673 (RDDEGWKGKQ…PGTPARWVEK (169 aa)). N560, N634, and N654 each carry an N-linked (GlcNAc...) asparagine glycan. Disulfide bonds link C708/C717, C710/C724, C726/C735, C738/C754, C757/C765, C759/C776, C779/C788, C791/C809, C812/C826, C814/C833, C836/C845, C848/C865, C868/C882, C870/C889, C891/C900, C903/C916, C919/C931, C921/C938, C940/C949, C952/C964, C967/C979, C969/C985, C987/C996, and C999/C1012. Laminin EGF-like domains follow at residues 708–756 (CNCN…DCKA), 757–811 (CPCP…ACRA), 812–867 (CSCN…KCKP), 868–918 (CKCS…GCER), 919–966 (CNCN…GCKP), and 967–1014 (CDCD…GCQQ). N1006, N1091, N1159, N1189, N1207, N1254, N1364, and N1379 each carry an N-linked (GlcNAc...) asparagine glycan. The interval 1014 to 1593 (QCPNCYSLVR…CFNTPSLERP (580 aa)) is domain II and I. A coiled-coil region spans residues 1021–1580 (LVRDKVNQQR…ANLNDIKNTL (560 aa)).

As to quaternary structure, laminin is a complex glycoprotein, consisting of three different polypeptide chains (alpha, beta, gamma), which are bound to each other by disulfide bonds into a cross-shaped molecule comprising one long and three short arms with globules at each end.

The protein resides in the secreted. It localises to the extracellular space. The protein localises to the extracellular matrix. It is found in the basement membrane. Its function is as follows. Binding to cells via a high affinity receptor, laminin is thought to mediate the attachment, migration and organization of cells into tissues during embryonic development by interacting with other extracellular matrix components. This Danio rerio (Zebrafish) protein is Laminin subunit gamma-1 (lamc1).